A 241-amino-acid chain; its full sequence is DNA repair protein RecO (241 aa).

Belongs to the RecO family.

Its function is as follows. Involved in DNA repair and RecF pathway recombination. In Phocaeicola vulgatus (strain ATCC 8482 / DSM 1447 / JCM 5826 / CCUG 4940 / NBRC 14291 / NCTC 11154) (Bacteroides vulgatus), this protein is DNA repair protein RecO.